The chain runs to 310 residues: MTSLSVHTDSPSTQGEMAFNLTILSLTELLSLGGLLGNGVALWLLNQNVYRNPFSIYLLDVACADLIFLCCHMVAIIPELLQDQLNFPEFVHISLTMLRFFCYIVGLSLLAAISTEQCLATLFPAWYLCRRPRYLTTCVCALIWVLCLLLDLLLSGACTQFFGAPSYHLCDMLWLVVAVLLAALCCTMCVTSLLLLLRVERGPERHQPRGFPTLVLLAVLLFLFCGLPFGIFWLSKNLSWHIPLYFYHFSFFMASVHSAAKPAIYFFLGSTPGQRFREPLRLVLQRALGDEAELGAGREASQGGLVDMTV.

Residues 1-22 (MTSLSVHTDSPSTQGEMAFNLT) are Extracellular-facing. Asn-20 carries an N-linked (GlcNAc...) asparagine glycan. The helical transmembrane segment at 23–43 (ILSLTELLSLGGLLGNGVALW) threads the bilayer. Residues 44–60 (LLNQNVYRNPFSIYLLD) lie on the Cytoplasmic side of the membrane. A helical transmembrane segment spans residues 61–81 (VACADLIFLCCHMVAIIPELL). Residues 82–92 (QDQLNFPEFVH) lie on the Extracellular side of the membrane. Residues 93–113 (ISLTMLRFFCYIVGLSLLAAI) traverse the membrane as a helical segment. The Cytoplasmic segment spans residues 114 to 133 (STEQCLATLFPAWYLCRRPR). Residues 134-154 (YLTTCVCALIWVLCLLLDLLL) form a helical membrane-spanning segment. Residues 155-174 (SGACTQFFGAPSYHLCDMLW) are Extracellular-facing. Residues 175-195 (LVVAVLLAALCCTMCVTSLLL) form a helical membrane-spanning segment. Residues 196-213 (LLRVERGPERHQPRGFPT) lie on the Cytoplasmic side of the membrane. The chain crosses the membrane as a helical span at residues 214-234 (LVLLAVLLFLFCGLPFGIFWL). Residues 235–248 (SKNLSWHIPLYFYH) lie on the Extracellular side of the membrane. Asn-237 is a glycosylation site (N-linked (GlcNAc...) asparagine). A helical membrane pass occupies residues 249–269 (FSFFMASVHSAAKPAIYFFLG). Residues 270 to 310 (STPGQRFREPLRLVLQRALGDEAELGAGREASQGGLVDMTV) lie on the Cytoplasmic side of the membrane.

Belongs to the G-protein coupled receptor 1 family. Mas subfamily.

The protein resides in the cell membrane. In terms of biological role, orphan receptor. May regulate nociceptor function and/or development, including the sensation or modulation of pain. In Mus musculus (Mouse), this protein is Mas-related G-protein coupled receptor member E (Mrgpre).